Consider the following 136-residue polypeptide: DNA-directed RNA polymerase subunit omega (136 aa).

The span at 90–102 (SSPAAAAVAPQSS) shows a compositional bias: low complexity. The interval 90–136 (SSPAAAAVAPQSSSDDKDVQFDRMSEEDLLRGLENLAPPTETDDEGE) is disordered. The segment covering 103 to 120 (SDDKDVQFDRMSEEDLLR) has biased composition (basic and acidic residues).

Belongs to the RNA polymerase subunit omega family. As to quaternary structure, the RNAP catalytic core consists of 2 alpha, 1 beta, 1 beta' and 1 omega subunit. When a sigma factor is associated with the core the holoenzyme is formed, which can initiate transcription.

The catalysed reaction is RNA(n) + a ribonucleoside 5'-triphosphate = RNA(n+1) + diphosphate. Its function is as follows. Promotes RNA polymerase assembly. Latches the N- and C-terminal regions of the beta' subunit thereby facilitating its interaction with the beta and alpha subunits. The sequence is that of DNA-directed RNA polymerase subunit omega from Methylorubrum populi (strain ATCC BAA-705 / NCIMB 13946 / BJ001) (Methylobacterium populi).